We begin with the raw amino-acid sequence, 431 residues long: Histidinol dehydrogenase (431 aa).

The NAD(+) site is built by tyrosine 127, glutamine 185, and asparagine 208. Positions 234, 256, and 259 each coordinate substrate. Zn(2+) is bound by residues glutamine 256 and histidine 259. Active-site proton acceptor residues include glutamate 323 and histidine 324. Substrate is bound by residues histidine 324, aspartate 357, glutamate 411, and histidine 416. Aspartate 357 contributes to the Zn(2+) binding site. Histidine 416 serves as a coordination point for Zn(2+).

The protein belongs to the histidinol dehydrogenase family. It depends on Zn(2+) as a cofactor.

The enzyme catalyses L-histidinol + 2 NAD(+) + H2O = L-histidine + 2 NADH + 3 H(+). It functions in the pathway amino-acid biosynthesis; L-histidine biosynthesis; L-histidine from 5-phospho-alpha-D-ribose 1-diphosphate: step 9/9. In terms of biological role, catalyzes the sequential NAD-dependent oxidations of L-histidinol to L-histidinaldehyde and then to L-histidine. The polypeptide is Histidinol dehydrogenase (Vibrio parahaemolyticus serotype O3:K6 (strain RIMD 2210633)).